The following is a 281-amino-acid chain: Large ribosomal subunit protein uL22 (281 aa).

The tract at residues 1 to 225 (MASPMGSTAS…KAGGAAEAEV (225 aa)) is large ribosomal subunit protein uL22. 2 disordered regions span residues 137–175 (RATK…PVAA) and 199–281 (AVAS…GGTR). The span at 139–153 (TKKAVPKGARHRRRL) shows a compositional bias: basic residues. 2 stretches are compositionally biased toward low complexity: residues 159–175 (PAAS…PVAA) and 199–239 (AVAS…APAA). The unknown stretch occupies residues 226 to 281 (ATTDEQTTETAPAAEAEKPAVRRPAARKSTTSARRRAAETEGHDSDAESTDEGGTR). Residues 261–271 (RAAETEGHDSD) show a composition bias toward basic and acidic residues. The span at 272–281 (AESTDEGGTR) shows a compositional bias: acidic residues.

Belongs to the universal ribosomal protein uL22 family. Part of the 50S ribosomal subunit.

The globular domain of the protein is located near the polypeptide exit tunnel on the outside of the subunit, while an extended beta-hairpin is found that lines the wall of the exit tunnel in the center of the 70S ribosome. Its function is as follows. This protein binds specifically to 23S rRNA; its binding is stimulated by other ribosomal proteins, e.g. L4, L17, and L20. It is important during the early stages of 50S assembly. It makes multiple contacts with different domains of the 23S rRNA in the assembled 50S subunit and ribosome. The sequence is that of Large ribosomal subunit protein uL22 from Acidothermus cellulolyticus (strain ATCC 43068 / DSM 8971 / 11B).